Here is an 841-residue protein sequence, read N- to C-terminus: Chitin synthase 1 (841 aa).

Residues 1–13 (MNPGQKQEHDQYP) are compositionally biased toward basic and acidic residues. The disordered stretch occupies residues 1 to 98 (MNPGQKQEHD…YGEAPRRQPR (98 aa)). A compositionally biased stretch (pro residues) spans 76–85 (PPQPMGPPSP). 9 helical membrane-spanning segments follow: residues 302-322 (WFFQAFGPVINPNVCVLIDVG), 385-405 (SVFGYISVLPGAFSAYRFTAL), 526-546 (LIFSWFALGNFYLTFYILTSA), 564-584 (ILHTILNYIYILLIIVQFILA), 602-622 (FFAILMVYMMFATIWITVVGV), 644-664 (NIIISIVSTYAMYFIASFLFF), 673-693 (FIQYIFLSPSYTNILNIYAFC), 778-798 (VISWIISNLILVVLITNENIL), and 816-836 (LWSVAGLSAIRFCGSGLYLIF).

Belongs to the chitin synthase family.

It localises to the cell membrane. The catalysed reaction is [(1-&gt;4)-N-acetyl-beta-D-glucosaminyl](n) + UDP-N-acetyl-alpha-D-glucosamine = [(1-&gt;4)-N-acetyl-beta-D-glucosaminyl](n+1) + UDP + H(+). Its function is as follows. Polymerizes chitin, a structural polymer of the cell wall and septum, by transferring the sugar moiety of UDP-GlcNAc to the non-reducing end of the growing chitin polymer. This is Chitin synthase 1 (chs1) from Phycomyces blakesleeanus (strain ATCC 8743b / DSM 1359 / FGSC 10004 / NBRC 33097 / NRRL 1555).